Reading from the N-terminus, the 131-residue chain is Ribonuclease VapC13 (131 aa).

The PINc domain maps to 2-128; the sequence is ILVDSNIPMY…RGFDSYPGIK (127 aa). Positions 5 and 99 each coordinate Mg(2+).

It belongs to the PINc/VapC protein family. It depends on Mg(2+) as a cofactor.

The protein localises to the secreted. In terms of biological role, toxic component of a type II toxin-antitoxin (TA) system. An RNase. The cognate antitoxin is VapB13. This chain is Ribonuclease VapC13, found in Mycobacterium tuberculosis (strain ATCC 25618 / H37Rv).